We begin with the raw amino-acid sequence, 315 residues long: Methionyl-tRNA formyltransferase (315 aa).

110-113 contributes to the (6S)-5,6,7,8-tetrahydrofolate binding site; sequence SLLP.

Belongs to the Fmt family.

The enzyme catalyses L-methionyl-tRNA(fMet) + (6R)-10-formyltetrahydrofolate = N-formyl-L-methionyl-tRNA(fMet) + (6S)-5,6,7,8-tetrahydrofolate + H(+). Its function is as follows. Attaches a formyl group to the free amino group of methionyl-tRNA(fMet). The formyl group appears to play a dual role in the initiator identity of N-formylmethionyl-tRNA by promoting its recognition by IF2 and preventing the misappropriation of this tRNA by the elongation apparatus. This is Methionyl-tRNA formyltransferase from Lactobacillus delbrueckii subsp. bulgaricus (strain ATCC BAA-365 / Lb-18).